Consider the following 99-residue polypeptide: MARITVEDCLEVVNNRFELVMMASKRARQLANGVQATLDNSETEDKPTVLALREIAARKIDNALIDEVEKAERERAEREALEWAAAEVVADEDMSKNDD.

This sequence belongs to the RNA polymerase subunit omega family. The RNAP catalytic core consists of 2 alpha, 1 beta, 1 beta' and 1 omega subunit. When a sigma factor is associated with the core the holoenzyme is formed, which can initiate transcription.

It carries out the reaction RNA(n) + a ribonucleoside 5'-triphosphate = RNA(n+1) + diphosphate. Functionally, promotes RNA polymerase assembly. Latches the N- and C-terminal regions of the beta' subunit thereby facilitating its interaction with the beta and alpha subunits. This chain is DNA-directed RNA polymerase subunit omega, found in Stenotrophomonas maltophilia (strain K279a).